Consider the following 77-residue polypeptide: Putative snRNP Sm-like protein (77 aa).

Residues 8–77 (PTLRMMLDYV…DSVVVITPAA (70 aa)) enclose the Sm domain.

This sequence belongs to the snRNP Sm proteins family.

The protein is Putative snRNP Sm-like protein of Aeropyrum pernix (strain ATCC 700893 / DSM 11879 / JCM 9820 / NBRC 100138 / K1).